Here is a 95-residue protein sequence, read N- to C-terminus: Aspartyl/glutamyl-tRNA(Asn/Gln) amidotransferase subunit C (95 aa).

It belongs to the GatC family. Heterotrimer of A, B and C subunits.

It catalyses the reaction L-glutamyl-tRNA(Gln) + L-glutamine + ATP + H2O = L-glutaminyl-tRNA(Gln) + L-glutamate + ADP + phosphate + H(+). It carries out the reaction L-aspartyl-tRNA(Asn) + L-glutamine + ATP + H2O = L-asparaginyl-tRNA(Asn) + L-glutamate + ADP + phosphate + 2 H(+). Functionally, allows the formation of correctly charged Asn-tRNA(Asn) or Gln-tRNA(Gln) through the transamidation of misacylated Asp-tRNA(Asn) or Glu-tRNA(Gln) in organisms which lack either or both of asparaginyl-tRNA or glutaminyl-tRNA synthetases. The reaction takes place in the presence of glutamine and ATP through an activated phospho-Asp-tRNA(Asn) or phospho-Glu-tRNA(Gln). This Chlorobium chlorochromatii (strain CaD3) protein is Aspartyl/glutamyl-tRNA(Asn/Gln) amidotransferase subunit C.